A 507-amino-acid polypeptide reads, in one-letter code: Sperm-associated antigen 6 (507 aa).

8 ARM repeats span residues 31 to 70 (PQNI…RLAN), 73 to 112 (DDLA…AVGK), 115 to 154 (PQLA…YIAR), 157 to 196 (TELS…DISK), 199 to 238 (PELA…QIAK), 241 to 280 (VDLA…EIAK), 325 to 365 (ENLA…QLGR), and 402 to 441 (KAIK…KVLP).

Interacts with SPAG16 and SPAG17. In terms of tissue distribution, highly expressed in testis. Not detected in prostate, ovary, spleen, thymus, small intestine, colon and peripheral blood leukocytes.

The protein localises to the cytoplasm. It is found in the cytoskeleton. The protein resides in the cell projection. Its subcellular location is the cilium. It localises to the flagellum. The protein localises to the cilium axoneme. In terms of biological role, important for structural integrity of the central apparatus in the sperm tail and for flagellar motility. The protein is Sperm-associated antigen 6 (Spag6) of Mus musculus (Mouse).